Consider the following 626-residue polypeptide: Probable potassium transport system protein Kup (626 aa).

12 consecutive transmembrane segments (helical) span residues 13–33 (VALM…SPLY), 53–73 (VLSI…VLLI), 102–122 (FFVV…MITP), 138–158 (HTLD…LFAI), 169–189 (LFGP…GWQV), 207–227 (FVFE…LALT), 248–268 (WFSM…ALLL), 277–297 (PFFL…ATVA), 338–358 (IYLP…VITF), 367–387 (AYGF…FAVL), 399–419 (WMLV…ANIF), and 421–441 (IHEG…LMMT).

Belongs to the HAK/KUP transporter (TC 2.A.72) family.

The protein localises to the cell inner membrane. The enzyme catalyses K(+)(in) + H(+)(in) = K(+)(out) + H(+)(out). Transport of potassium into the cell. Likely operates as a K(+):H(+) symporter. In Bordetella avium (strain 197N), this protein is Probable potassium transport system protein Kup.